Consider the following 369-residue polypeptide: Glutamate 5-kinase (369 aa).

Position 14 (Lys-14) interacts with ATP. The substrate site is built by Ser-54, Asp-141, and Asn-153. ATP-binding positions include 173–174 (SD) and 215–221 (TGGMVTK). A PUA domain is found at 277–355 (RGRLHLDPGA…SELATALGPA (79 aa)).

It belongs to the glutamate 5-kinase family.

Its subcellular location is the cytoplasm. The catalysed reaction is L-glutamate + ATP = L-glutamyl 5-phosphate + ADP. The protein operates within amino-acid biosynthesis; L-proline biosynthesis; L-glutamate 5-semialdehyde from L-glutamate: step 1/2. Catalyzes the transfer of a phosphate group to glutamate to form L-glutamate 5-phosphate. This Salinispora arenicola (strain CNS-205) protein is Glutamate 5-kinase.